The sequence spans 181 residues: Large ribosomal subunit protein uL16 (181 aa).

The protein belongs to the universal ribosomal protein uL16 family. Part of the 50S ribosomal subunit.

This is Large ribosomal subunit protein uL16 from Pyrococcus furiosus (strain ATCC 43587 / DSM 3638 / JCM 8422 / Vc1).